Reading from the N-terminus, the 338-residue chain is Heat-inducible transcription repressor HrcA (338 aa).

Belongs to the HrcA family.

Negative regulator of class I heat shock genes (grpE-dnaK-dnaJ and groELS operons). Prevents heat-shock induction of these operons. This is Heat-inducible transcription repressor HrcA from Streptomyces albus G.